The sequence spans 219 residues: MTQDELKKAVGWAALEFVTPGTVVGVGTGSTASHFIDALGSIKDQIEGAVSSSEASTEKLKSLGIPVFDCNEVDSLDIYVDGADEINGNMQMIKGGGAALTREKIIAAIAKKFVCIVDASKKVEVLGKFPLPVEVIPMARAYVARELVKLGGVPKYRQNVVTDNGNVILDVHNLAILDPAELENKINRISGVVTVGLFANRGADIVLMGTLDGVETITQ.

Substrate contacts are provided by residues 28–31 (TGST), 81–84 (DGAD), and 94–97 (KGGG). The active-site Proton acceptor is glutamate 103. Residue lysine 121 coordinates substrate.

Belongs to the ribose 5-phosphate isomerase family. Homodimer.

It carries out the reaction aldehydo-D-ribose 5-phosphate = D-ribulose 5-phosphate. It participates in carbohydrate degradation; pentose phosphate pathway; D-ribose 5-phosphate from D-ribulose 5-phosphate (non-oxidative stage): step 1/1. Its function is as follows. Catalyzes the reversible conversion of ribose-5-phosphate to ribulose 5-phosphate. The chain is Ribose-5-phosphate isomerase A from Photorhabdus laumondii subsp. laumondii (strain DSM 15139 / CIP 105565 / TT01) (Photorhabdus luminescens subsp. laumondii).